We begin with the raw amino-acid sequence, 264 residues long: Thymidylate synthase (264 aa).

Residue Arg21 participates in dUMP binding. His51 is a binding site for (6R)-5,10-methylene-5,6,7,8-tetrahydrofolate. 126-127 (RR) is a dUMP binding site. The active-site Nucleophile is Cys146. DUMP is bound by residues 166 to 169 (RSAD), Asn177, and 207 to 209 (HLY). A (6R)-5,10-methylene-5,6,7,8-tetrahydrofolate-binding site is contributed by Asp169. (6R)-5,10-methylene-5,6,7,8-tetrahydrofolate is bound at residue Ala263.

It belongs to the thymidylate synthase family. Bacterial-type ThyA subfamily. In terms of assembly, homodimer.

It is found in the cytoplasm. The enzyme catalyses dUMP + (6R)-5,10-methylene-5,6,7,8-tetrahydrofolate = 7,8-dihydrofolate + dTMP. Its pathway is pyrimidine metabolism; dTTP biosynthesis. Catalyzes the reductive methylation of 2'-deoxyuridine-5'-monophosphate (dUMP) to 2'-deoxythymidine-5'-monophosphate (dTMP) while utilizing 5,10-methylenetetrahydrofolate (mTHF) as the methyl donor and reductant in the reaction, yielding dihydrofolate (DHF) as a by-product. This enzymatic reaction provides an intracellular de novo source of dTMP, an essential precursor for DNA biosynthesis. The protein is Thymidylate synthase of Nitrosomonas eutropha (strain DSM 101675 / C91 / Nm57).